Reading from the N-terminus, the 276-residue chain is Tryptophan synthase alpha chain (276 aa).

Active-site proton acceptor residues include glutamate 46 and glutamate 57.

This sequence belongs to the TrpA family. In terms of assembly, tetramer of two alpha and two beta chains.

The catalysed reaction is (1S,2R)-1-C-(indol-3-yl)glycerol 3-phosphate + L-serine = D-glyceraldehyde 3-phosphate + L-tryptophan + H2O. Its pathway is amino-acid biosynthesis; L-tryptophan biosynthesis; L-tryptophan from chorismate: step 5/5. Its function is as follows. The alpha subunit is responsible for the aldol cleavage of indoleglycerol phosphate to indole and glyceraldehyde 3-phosphate. The polypeptide is Tryptophan synthase alpha chain (Halobacterium salinarum (strain ATCC 29341 / DSM 671 / R1)).